The chain runs to 109 residues: Staphostatin B (109 aa).

The interval 97 to 101 (IGTSR) is binds to staphopain B.

It belongs to the protease inhibitor I57 (SspC) family. In terms of assembly, forms a stable non-covalent complex with prematurely activated/folded SspB.

It is found in the cytoplasm. Specifically inhibits the cysteine protease staphopain B (SspB) by blocking the active site of the enzyme. Probably required to protect cytoplasmic proteins from being degraded by prematurely activated/folded prostaphopain B. Also involved in growth capacity, viability and bacterial morphology. The sequence is that of Staphostatin B (sspC) from Staphylococcus aureus (strain MRSA252).